Consider the following 591-residue polypeptide: Aspartate--tRNA(Asp/Asn) ligase (591 aa).

Glutamate 175 lines the L-aspartate pocket. The aspartate stretch occupies residues 199–202 (QQFK). The L-aspartate site is built by arginine 221 and histidine 453. 221-223 (RDE) is an ATP binding site. Glutamate 486 contributes to the ATP binding site. Residue arginine 493 participates in L-aspartate binding. ATP is bound at residue 538–541 (GIDR).

The protein belongs to the class-II aminoacyl-tRNA synthetase family. Type 1 subfamily. Homodimer.

Its subcellular location is the cytoplasm. The catalysed reaction is tRNA(Asx) + L-aspartate + ATP = L-aspartyl-tRNA(Asx) + AMP + diphosphate. Its function is as follows. Aspartyl-tRNA synthetase with relaxed tRNA specificity since it is able to aspartylate not only its cognate tRNA(Asp) but also tRNA(Asn). Reaction proceeds in two steps: L-aspartate is first activated by ATP to form Asp-AMP and then transferred to the acceptor end of tRNA(Asp/Asn). The chain is Aspartate--tRNA(Asp/Asn) ligase from Paracoccus denitrificans (strain Pd 1222).